A 624-amino-acid chain; its full sequence is Chitin elicitor receptor kinase 1 (624 aa).

The signal sequence occupies residues 1–18 (MEASTSLLVLVLAAAAFA). Topologically, residues 19-240 (AGTVTEAAGD…SPGKGASAGA (222 aa)) are extracellular. Disulfide bonds link Cys30–Cys93, Cys34–Cys160, and Cys91–Cys158. Residue Asn48 is glycosylated (N-linked (GlcNAc...) asparagine). 115–121 (RGQIYTS) provides a ligand contact to chitin. Asn128 is a glycosylation site (N-linked (GlcNAc...) asparagine). 142 to 148 (PANNIPD) provides a ligand contact to chitin. 2 N-linked (GlcNAc...) asparagine glycosylation sites follow: Asn153 and Asn157. Residues 173–218 (LTYPLRAEDTLASVAATYGLSSQLDVVRRYNPGMESATGSGIVYIP) form the LysM domain. Asn223 is a glycosylation site (N-linked (GlcNAc...) asparagine). Residues 241-261 (IAGGVVAGVVVLAAIFLYIIF) traverse the membrane as a helical segment. The Cytoplasmic segment spans residues 262-624 (YRRRKAKQAT…QGLVNLMSGR (363 aa)). One can recognise a Protein kinase domain in the interval 324–599 (FSIGNKIGQG…RSVVVALMTL (276 aa)). Residues 330 to 338 (IGQGGFGAV) and Lys351 each bind ATP. The Proton acceptor role is filled by Asp443.

The protein belongs to the protein kinase superfamily. Ser/Thr protein kinase family. Homooligomer. Interacts with CEBIP. Interacts with LYP4 and LYP6. Interacts with RLCK176. Post-translationally, autophosphorylated; induced by chitin and derivatives. In terms of tissue distribution, expressed in seedlings, roots, shoots and stems, and, to a lower extent, in flowers.

The protein resides in the cell membrane. It catalyses the reaction L-seryl-[protein] + ATP = O-phospho-L-seryl-[protein] + ADP + H(+). It carries out the reaction L-threonyl-[protein] + ATP = O-phospho-L-threonyl-[protein] + ADP + H(+). Its function is as follows. Lysin motif (LysM) receptor kinase required as a cell surface receptor for chitin elicitor (chitooligosaccharides) signaling leading to innate immunity in response to biotic stresses. Involved in the resistance to pathogenic fungi, probably by sensing microbe-associated molecular patterns (MAMP) and pathogen-associated molecular patterns (PAMP). Involved in the detection of microbial peptidoglycans (PGNs) and mediates PGN response. Plays dual roles in PGN and chitin signaling during innate immunity. Acts as an adapter for LYP4 and LYP6 and mediates signal transduction from the extracellular to intracellular spaces. Participates in the activation of defense genes during response to PGN and chitin. Phosphorylates the downstream partner RLCK185 in response to chitin elicitation. The sequence is that of Chitin elicitor receptor kinase 1 from Oryza sativa subsp. japonica (Rice).